We begin with the raw amino-acid sequence, 79 residues long: Hematopoietic cell signal transducer (79 aa).

Positions 1–18 (MAPPGGILFLLLLPVAAA) are cleaved as a signal peptide. The Extracellular segment spans residues 19 to 35 (QVTSGSCSGCGPLSLPL). Residues 36–56 (LAGLVAADAVVSLLIVVGVFV) traverse the membrane as a helical segment. The Cytoplasmic segment spans residues 57–79 (CGRPRSRPTQEDGKIYINMPGRG). Y72 carries the post-translational modification Phosphotyrosine. Residues 72 to 74 (YIN) are GRB2 binding site. The interval 72–75 (YINM) is PIK3R1 binding site.

Belongs to the DAP10 family. As to quaternary structure, homodimer; Disulfide-linked. Heterohexamer composed of four subunits of HCST/DAP10 and two subunits of KLRK1. Interacts (via transmembrane domain) with KLRK1 (via transmembrane domain); the interaction is required for KLRK1 NK cell surface and induces NK cell-mediated cytotoxicity. Interacts with PIK3R1 and GRB2. Interacts with CLEC5A. Forms an CLEC5A/TYROBP/HCST trimolecular complex depending almost solely on TYROBP. Interacts with KLRK1. Interacts with CD300H. In terms of processing, phosphorylated; PIK3R1 and GRB2 associate specifically with tyrosine-phosphorylated HCST. O-glycosylated. As to expression, expressed predominantly in lymphohematopoietic tissues.

Its subcellular location is the membrane. In terms of biological role, transmembrane adapter protein which associates with KLRK1 to form an activation receptor KLRK1-HCST in lymphoid and myeloid cells; this receptor plays a major role in triggering cytotoxicity against target cells expressing cell surface ligands such as MHC class I chain-related MICA and MICB, and UL16-binding proteins (ULBPs); these ligands are up-regulated by stress conditions and pathological state such as viral infection and tumor transformation. Functions as a docking site for PI3-kinase PIK3R1 and GRB2. Interaction of ULBPs with KLRK1-HCST triggers calcium mobilization and activation of the PIK3R1, MAP2K/ERK, and JAK2/STAT5 signaling pathways. Both PIK3R1 and GRB2 are required for full KLRK1-HCST-mediated activation and ultimate killing of target cells. In NK cells, KLRK1-HCST signaling directly induces cytotoxicity and enhances cytokine production initiated via DAP12/TYROBP-associated receptors. In T-cells, it provides primarily costimulation for TCR-induced signals. KLRK1-HCST receptor plays a role in immune surveillance against tumors and is required for cytolysis of tumors cells; indeed, melanoma cells that do not express KLRK1 ligands escape from immune surveillance mediated by NK cells. This Sus scrofa (Pig) protein is Hematopoietic cell signal transducer (HCST).